Consider the following 378-residue polypeptide: Probable 3-hydroxyisobutyryl-CoA hydrolase 3 (378 aa).

Substrate is bound by residues Glu-138 and Asp-146.

This sequence belongs to the enoyl-CoA hydratase/isomerase family.

Its subcellular location is the peroxisome. The enzyme catalyses 3-hydroxy-2-methylpropanoyl-CoA + H2O = 3-hydroxy-2-methylpropanoate + CoA + H(+). It functions in the pathway amino-acid degradation; L-valine degradation. Functionally, involved in valine catabolism. The polypeptide is Probable 3-hydroxyisobutyryl-CoA hydrolase 3 (Arabidopsis thaliana (Mouse-ear cress)).